Here is a 35-residue protein sequence, read N- to C-terminus: Photosystem II reaction center protein M (35 aa).

Residues 5-25 (ILGLIATALFILIPTSFLIIL) form a helical membrane-spanning segment.

The protein belongs to the PsbM family. PSII is composed of 1 copy each of membrane proteins PsbA, PsbB, PsbC, PsbD, PsbE, PsbF, PsbH, PsbI, PsbJ, PsbK, PsbL, PsbM, PsbT, PsbX, PsbY, PsbZ, Psb30/Ycf12, at least 3 peripheral proteins of the oxygen-evolving complex and a large number of cofactors. It forms dimeric complexes.

It is found in the plastid. Its subcellular location is the chloroplast thylakoid membrane. Functionally, one of the components of the core complex of photosystem II (PSII). PSII is a light-driven water:plastoquinone oxidoreductase that uses light energy to abstract electrons from H(2)O, generating O(2) and a proton gradient subsequently used for ATP formation. It consists of a core antenna complex that captures photons, and an electron transfer chain that converts photonic excitation into a charge separation. This subunit is found at the monomer-monomer interface. This is Photosystem II reaction center protein M from Oltmannsiellopsis viridis (Marine flagellate).